Consider the following 515-residue polypeptide: Cytidine and dCMP deaminase domain-containing protein 1 (515 aa).

Polar residues-rich tracts occupy residues 1–11 (MKEAGQMQNLE) and 18–27 (SVSTQTGSMT). Disordered stretches follow at residues 1-27 (MKEA…GSMT) and 56-83 (RQKS…STDK). The span at 60–83 (QKNEEGKHGPLGDNEEMTRVSTDK) shows a compositional bias: basic and acidic residues. Residues 71 to 169 (GDNEEMTRVS…SLLTEASSSE (99 aa)) enclose the CMP/dCMP-type deaminase 1 domain. Zn(2+) is bound by residues H110, C135, and C138. The Nuclear export signal signature appears at 272–284 (NLRQNMKDLILLL). Residues 318-483 (EIARHCMVQA…LNPSGAYGLE (166 aa)) enclose the CMP/dCMP-type deaminase 2 domain. H399 lines the Zn(2+) pocket. E401 (proton donor) is an active-site residue. C427 and C430 together coordinate Zn(2+). Positions 489–511 (RRENGVLRPVPQKEEQHQDKKLC) match the Bipartite nuclear localization signal motif. The interval 494-515 (VLRPVPQKEEQHQDKKLCLGIH) is disordered.

Belongs to the cytidine and deoxycytidylate deaminase family. It depends on Zn(2+) as a cofactor.

It localises to the cytoplasm. Its subcellular location is the nucleus. The enzyme catalyses 2'-deoxycytidine + H2O + H(+) = 2'-deoxyuridine + NH4(+). It carries out the reaction cytidine + H2O + H(+) = uridine + NH4(+). Catalyzes the deamination of cytidine and deoxycytidine into uridine and deoxyuridine, respectively. May play an important role in testicular development and spermatogenesis. The polypeptide is Cytidine and dCMP deaminase domain-containing protein 1 (CDADC1) (Pongo abelii (Sumatran orangutan)).